The primary structure comprises 281 residues: ATP synthase subunit a (281 aa).

The next 7 helical transmembrane spans lie at 56-76, 117-137, 144-164, 181-201, 215-235, 237-257, and 259-279; these read KPMLLALLGSIVIVGFFWAAF, LVVSLFFFVWMMNLWSIIPVA, IIAYPAVLAAIVYVTWITLTF, KSLGPVLPLAMLIEFFSNILI, FAGHTLLLLFTIASWYLLNGV, IAYAGVSFIMTVVMTAFELFI, and ALQAYVFVLLTCTYIQGAMAE.

It belongs to the ATPase A chain family. In terms of assembly, F-type ATPases have 2 components, CF(1) - the catalytic core - and CF(0) - the membrane proton channel. CF(1) has five subunits: alpha(3), beta(3), gamma(1), delta(1), epsilon(1). CF(0) has three main subunits: a(1), b(2) and c(9-12). The alpha and beta chains form an alternating ring which encloses part of the gamma chain. CF(1) is attached to CF(0) by a central stalk formed by the gamma and epsilon chains, while a peripheral stalk is formed by the delta and b chains.

The protein localises to the cell membrane. In terms of biological role, key component of the proton channel; it plays a direct role in the translocation of protons across the membrane. This is ATP synthase subunit a from Streptomyces lividans.